An 876-amino-acid polypeptide reads, in one-letter code: MDPGDPAGDPAAGERHRMGRDPLLLLQALQTLWSTRERKQLREEAWRGFAALDDPLAGLLDMLESCRGQRGEGPSLAAWISHQLQCWLQAQPCPSLAQHSLRLKQLQARAVKVLTESPPSLAAPLASIFQLQDADRSCLLAHVHRLHHEGRFREAATLGATLKLQSELGVEKMSIPLLLQDKVALVERYVAGFPDLQRRLLVLMDSWCQPGFDIKDVARRYPEVTSLSLEKLSPKALSRQVLRLQERYGVAPALCPNAAIQQRLAALRHLCHKRFVEKSLSQENWTDHVQGLVGQSPWLQEQLSQLLVSHSDPVTAAQCAMELLLPEERLPAAVAVELRRFRLQGRATEADSRLEVKDMKDRYYQLPIPRENVHLLASWEDLTRHEGALLQCHQVVGVDVEWTPVFVAGGRPRPSLLQVAVEGHVFLLDVLALSQPPTGQGAQAFSRLVAQLLSDPSITKLGYGMVGDLQKLGTSCPALAHVEKQILGGMDLLLVHRQMRVASVPAPAVDRARELRGLSLLVQQVLGTALDKTQQLSNWDRRPLCEEQVIYAAADAYCLLEVHQALCREPARFHLSEDLAGSRRPRHRERPGARKPPGLQKASAPAAPRQVPVAVAVSEGAAPQIPARAFRVVCDNMLQGLARSLRCLGVDARMLGNGEDHRRAAEVARQEGRIILTSGQPFHKLRAQVGAGRCLSVDCSLKAQQQAKAVLKHFNVRVTHADIFSRCQACNCDQYLKVSRDMMKQLMWLSSHQEGPRSSGDEATQSQAVQEPGPAPDAAPEGCTYDRPCRWLQMADLRAETPDMLADGTRLQLAGVPVGVLRTPGLRCFYCCTGCGKVFWDGSHLGRVATHFRDMLESAPSPCEPSPAPSPASSPF.

In terms of domain architecture, 3'-5' exonuclease spans 517–571 (GLSLLVQQVLGTALDKTQQLSNWDRRPLCEEQVIYAAADAYCLLEVHQALCREPA). Disordered stretches follow at residues 578–607 (DLAG…APAA) and 751–781 (SHQE…AAPE).

Belongs to the mut-7 family. Mg(2+) serves as cofactor.

Functionally, possesses 3'-5' exoribonuclease activity. Required for 3'-end trimming of AGO1-bound miRNAs. In Homo sapiens (Human), this protein is Exonuclease mut-7 homolog (EXD3).